A 492-amino-acid chain; its full sequence is Trk system potassium uptake protein TrkI (492 aa).

Transmembrane regions (helical) follow at residues 20–40, 47–67, 81–101, 143–163, 196–216, 246–266, 282–302, 334–354, 403–423, and 465–485; these read VLAV…LVLI, ALAF…SWIV, FVLT…PLVL, IMQW…LPFL, IYCG…MSPL, QLLW…VLYI, VQGL…WRVS, AWGA…GCSG, VVAF…GLSL, and WLLC…LVLL.

Belongs to the TrkH potassium transport family.

It is found in the cell inner membrane. Medium-affinity potassium transport system. Probably interacts with Trk system potassium uptake protein TrkA. Main K(+) transporter in osmotically adapted cells. This is Trk system potassium uptake protein TrkI (trkI) from Halomonas elongata (strain ATCC 33173 / DSM 2581 / NBRC 15536 / NCIMB 2198 / 1H9).